The sequence spans 256 residues: Small ribosomal subunit protein uS2 (256 aa).

This sequence belongs to the universal ribosomal protein uS2 family.

This chain is Small ribosomal subunit protein uS2, found in Ruegeria sp. (strain TM1040) (Silicibacter sp.).